The primary structure comprises 227 residues: Cytochrome c oxidase subunit 2 (227 aa).

The Mitochondrial intermembrane portion of the chain corresponds to 1-14 (MAYPFQLGLQDATS). A helical membrane pass occupies residues 15-45 (PIMEELTNFHDHTLMIVFLISSLVLYIISLM). Residues 46–59 (LTTKLTHTSTMDAQ) lie on the Mitochondrial matrix side of the membrane. The helical transmembrane segment at 60-87 (EVETIWTILPAVILILIALPSLRILYMM) threads the bilayer. The Mitochondrial intermembrane segment spans residues 88–227 (DEINNPVLTV…YFENWSASMI (140 aa)). Cu cation is bound by residues H161, C196, E198, C200, H204, and M207. Residue E198 coordinates Mg(2+). At Y218 the chain carries Phosphotyrosine.

This sequence belongs to the cytochrome c oxidase subunit 2 family. In terms of assembly, component of the cytochrome c oxidase (complex IV, CIV), a multisubunit enzyme composed of 14 subunits. The complex is composed of a catalytic core of 3 subunits MT-CO1, MT-CO2 and MT-CO3, encoded in the mitochondrial DNA, and 11 supernumerary subunits COX4I, COX5A, COX5B, COX6A, COX6B, COX6C, COX7A, COX7B, COX7C, COX8 and NDUFA4, which are encoded in the nuclear genome. The complex exists as a monomer or a dimer and forms supercomplexes (SCs) in the inner mitochondrial membrane with NADH-ubiquinone oxidoreductase (complex I, CI) and ubiquinol-cytochrome c oxidoreductase (cytochrome b-c1 complex, complex III, CIII), resulting in different assemblies (supercomplex SCI(1)III(2)IV(1) and megacomplex MCI(2)III(2)IV(2)). Found in a complex with TMEM177, COA6, COX18, COX20, SCO1 and SCO2. Interacts with TMEM177 in a COX20-dependent manner. Interacts with COX20. Interacts with COX16. Requires Cu cation as cofactor.

The protein resides in the mitochondrion inner membrane. The catalysed reaction is 4 Fe(II)-[cytochrome c] + O2 + 8 H(+)(in) = 4 Fe(III)-[cytochrome c] + 2 H2O + 4 H(+)(out). Functionally, component of the cytochrome c oxidase, the last enzyme in the mitochondrial electron transport chain which drives oxidative phosphorylation. The respiratory chain contains 3 multisubunit complexes succinate dehydrogenase (complex II, CII), ubiquinol-cytochrome c oxidoreductase (cytochrome b-c1 complex, complex III, CIII) and cytochrome c oxidase (complex IV, CIV), that cooperate to transfer electrons derived from NADH and succinate to molecular oxygen, creating an electrochemical gradient over the inner membrane that drives transmembrane transport and the ATP synthase. Cytochrome c oxidase is the component of the respiratory chain that catalyzes the reduction of oxygen to water. Electrons originating from reduced cytochrome c in the intermembrane space (IMS) are transferred via the dinuclear copper A center (CU(A)) of subunit 2 and heme A of subunit 1 to the active site in subunit 1, a binuclear center (BNC) formed by heme A3 and copper B (CU(B)). The BNC reduces molecular oxygen to 2 water molecules using 4 electrons from cytochrome c in the IMS and 4 protons from the mitochondrial matrix. The polypeptide is Cytochrome c oxidase subunit 2 (Rattus norvegicus (Rat)).